A 108-amino-acid polypeptide reads, in one-letter code: Large ribosomal subunit protein uL23 (108 aa).

It belongs to the universal ribosomal protein uL23 family. In terms of assembly, part of the 50S ribosomal subunit. Contacts protein L29, and trigger factor when it is bound to the ribosome.

Its function is as follows. One of the early assembly proteins it binds 23S rRNA. One of the proteins that surrounds the polypeptide exit tunnel on the outside of the ribosome. Forms the main docking site for trigger factor binding to the ribosome. The protein is Large ribosomal subunit protein uL23 of Mycoplasmoides gallisepticum (strain R(low / passage 15 / clone 2)) (Mycoplasma gallisepticum).